The primary structure comprises 154 residues: 6,7-dimethyl-8-ribityllumazine synthase (154 aa).

Residues phenylalanine 22, alanine 57 to glutamate 59, and alanine 81 to isoleucine 83 each bind 5-amino-6-(D-ribitylamino)uracil. Residue glycine 86 to threonine 87 coordinates (2S)-2-hydroxy-3-oxobutyl phosphate. Histidine 89 serves as the catalytic Proton donor. Phenylalanine 114 contacts 5-amino-6-(D-ribitylamino)uracil. Residue arginine 128 coordinates (2S)-2-hydroxy-3-oxobutyl phosphate.

Belongs to the DMRL synthase family. Forms an icosahedral capsid composed of 60 subunits, arranged as a dodecamer of pentamers.

It carries out the reaction (2S)-2-hydroxy-3-oxobutyl phosphate + 5-amino-6-(D-ribitylamino)uracil = 6,7-dimethyl-8-(1-D-ribityl)lumazine + phosphate + 2 H2O + H(+). It participates in cofactor biosynthesis; riboflavin biosynthesis; riboflavin from 2-hydroxy-3-oxobutyl phosphate and 5-amino-6-(D-ribitylamino)uracil: step 1/2. In terms of biological role, catalyzes the formation of 6,7-dimethyl-8-ribityllumazine by condensation of 5-amino-6-(D-ribitylamino)uracil with 3,4-dihydroxy-2-butanone 4-phosphate. This is the penultimate step in the biosynthesis of riboflavin. This chain is 6,7-dimethyl-8-ribityllumazine synthase, found in Colwellia psychrerythraea (strain 34H / ATCC BAA-681) (Vibrio psychroerythus).